Consider the following 427-residue polypeptide: Glucose-6-phosphate isomerase (427 aa).

Residue glutamate 281 is the Proton donor of the active site. Catalysis depends on residues histidine 302 and lysine 417.

It belongs to the GPI family.

The protein resides in the cytoplasm. It catalyses the reaction alpha-D-glucose 6-phosphate = beta-D-fructose 6-phosphate. The protein operates within carbohydrate biosynthesis; gluconeogenesis. It functions in the pathway carbohydrate degradation; glycolysis; D-glyceraldehyde 3-phosphate and glycerone phosphate from D-glucose: step 2/4. Catalyzes the reversible isomerization of glucose-6-phosphate to fructose-6-phosphate. The sequence is that of Glucose-6-phosphate isomerase from Mycoplasmopsis pulmonis (strain UAB CTIP) (Mycoplasma pulmonis).